Here is a 116-residue protein sequence, read N- to C-terminus: Non-specific lipid-transfer protein (116 aa).

The N-terminal stretch at 1–25 (MASMVMNVLCVAVACMVFSASYADA) is a signal peptide. 4 disulfides stabilise this stretch: C28–C75, C38–C52, C53–C98, and C73–C112.

It belongs to the plant LTP family.

Its function is as follows. Plant non-specific lipid-transfer proteins transfer phospholipids as well as galactolipids across membranes. May play a role in wax or cutin deposition in the cell walls of expanding epidermal cells and certain secretory tissues. In Gerbera hybrida (Daisy), this protein is Non-specific lipid-transfer protein.